An 896-amino-acid polypeptide reads, in one-letter code: Serine/threonine-protein kinase TAO3 (896 aa).

Positions 24-277 (FVDLHEIGHG…SLELLRHDFV (254 aa)) constitute a Protein kinase domain. ATP-binding positions include 30-38 (IGHGSFGAV) and Lys-53. Asp-147 acts as the Proton acceptor in catalysis. Disordered stretches follow at residues 316-366 (SRNG…SVNS) and 403-423 (DEADHRDPRPELRPTQSVQSQ). Residues 334–348 (GTSLTRKMDSLGSNH) show a composition bias toward polar residues. Positions 349 to 366 (SIPSTSVSTGSQSSSVNS) are enriched in low complexity. Residues 403 to 414 (DEADHRDPRPEL) show a composition bias toward basic and acidic residues. 3 coiled-coil regions span residues 450 to 513 (EQEN…SKRQ), 545 to 650 (SFLE…LIRQ), and 752 to 873 (LKSL…IETF). Residues 565 to 587 (LNEDHSTPKKEKQERISKHKENL) are compositionally biased toward basic and acidic residues. Positions 565–593 (LNEDHSTPKKEKQERISKHKENLQHTQAE) are disordered.

Belongs to the protein kinase superfamily. STE Ser/Thr protein kinase family. STE20 subfamily.

The protein localises to the cytoplasm. Its subcellular location is the cell membrane. It is found in the membrane raft. It localises to the lipid droplet. The catalysed reaction is L-seryl-[protein] + ATP = O-phospho-L-seryl-[protein] + ADP + H(+). It catalyses the reaction L-threonyl-[protein] + ATP = O-phospho-L-threonyl-[protein] + ADP + H(+). Serine/threonine-protein kinase that acts as a regulator of the p38/MAPK14 stress-activated MAPK cascade and of the MAPK8/JNK cascade. In response to DNA damage, involved in the G2/M transition DNA damage checkpoint by activating the p38/MAPK14 stress-activated MAPK cascade, probably by mediating phosphorylation of upstream MAP kinase kinases. Inhibits basal activity of the MAPK8/JNK cascade. The sequence is that of Serine/threonine-protein kinase TAO3 (taok3) from Xenopus laevis (African clawed frog).